A 253-amino-acid chain; its full sequence is VTSITLDLVNPTAGQYSSFVDKIRNNVKDPNLKYGGTDIAVIGPPSKDKFLRINFQSSRGTVSLGLKRDNLYVVAYLAMDNTNVNRAYYFRSEITSAELTALFPEATAANHKALEYTEDYHSIEKNAQITEGDKSRKELGLGINLLSSTMDTVNKKVRVVKNEARFLLIAIQMTAEAVRFRYIQNLVTKNFPNKFNSENKVIKFEVNWKKISTAIHGDAKNGVFNKDYDFGFGKVRLVKDLQMGLLMHLGKPK.

The active site involves Glu176.

It carries out the reaction Endohydrolysis of the N-glycosidic bond at one specific adenosine on the 28S rRNA.. Functionally, ribosome-inactivating protein of type 1, inhibits protein synthesis in animal cells. The protein is Ribosome-inactivating protein saporin-9 (SAP9) of Saponaria officinalis (Common soapwort).